Here is a 54-residue protein sequence, read N- to C-terminus: Apelin receptor early endogenous ligand (54 aa).

The first 23 residues, 1–23 (MRFQPLFWVFFIFAMSLLFISEQ), serve as a signal peptide directing secretion.

This sequence belongs to the Elabela/Toddler family. As to quaternary structure, interacts with APLNR. Expressed in the placenta. Expressed in syncytiotrophoblasts of the placenta labyrinth at 10.5 dpc. Expressed in placental chorionic trophoblasts (at protein level). Expressed in a small population of epiblast cells in the distal half of the embryo at 7 dpc. Expressed in newly formed definitive endoderm cells in the proximal half of the embryo, while it is not present in extra-embryonic endoderm at 7.5 dpc. This expression pattern then changes to the ventral aspect of the developing foregut pocket and the entire hindgut pocket at 8.5 dpc, before becoming restricted to the foregut overlying the heart and the posterior-most hindgut. Not detected in endothelial precursor cells of the yolk sac at 8 dpc. Expressed in extraembryonic tissues as well as in the chorion at 8.25 dpc. Expressed in endometrial stroma of the uterus of pregnant mice at 8.5 dpc. Expressed in the developing heart, caudal neural tube and trophobasts at 9 dpc. Expressed in the chorionic plate of the chorioallantoic placenta at 9 dpc. Expressed in the posterior half of the ventral neural tube at 9.25 dpc. Expressed in trophoblast cells at the periphery of the placenta at 9.5 dpc. Expressed in collecting ducts of the kidney of pregnant mice at 10.5 dpc. Expressed in the epicardium of the developing heart at 11.5 dpc. Expressed weakly in the adult heart. Expressed in endothelial cells and fibroblasts and weakly in cardiomyocytes.

It localises to the secreted. Its subcellular location is the extracellular space. Functionally, peptide hormone that functions as endogenous ligand for the G-protein-coupled apelin receptor (APLNR/APJ), that plays a role in the regulation of normal cardiovascular function and fluid homeostasis. Functions as a balanced agonist activating both G(i) protein pathway and beta-arrestin pathway of APLNR. Downstream G proteins activation, apelin can inhibit cAMP production and activate key intracellular effectors such as ERKs. On the other hand, APLNR activation induces beta-arrestin recruitment to the membrane leading to desensitization and internalization of the receptor. Required for mesendodermal differentiation, blood vessels formation and heart morphogenesis during early development and for adult cardiovascular homeostasis. Acts as a motogen by promoting mesendodermal cell migration during gastrulation by binding and activating APLNR. Acts as an early embryonic regulator of cellular movement with a role in migration and development of cardiac progenitor cells. May act as a chemoattractant for the activation of angioblast migration toward the embryonic midline, i.e. the position of the future vessel formation, during vasculogenesis. Positively regulates sinus venosus (SV)-derived endothelial cells migration into the developing heart to promote coronary blood vessel sprouting. Plays a role in placental vascular development; promotes placental trophoblast invasion and spiral artery remodeling in the uterus. Involved in the regulation of maternal cardiovascular homeostasis to prevent gestational hypertension and for potent cardioprotective functions during heart failure. Mediates myocardial contractility in an ERK1/2-dependent manner. This chain is Apelin receptor early endogenous ligand, found in Mus musculus (Mouse).